Consider the following 21-residue polypeptide: Cupiennin-6e (21 aa).

Position 21 is a serine amide (serine 21).

In terms of tissue distribution, expressed by the venom gland.

The protein localises to the secreted. This Cupiennius salei (American wandering spider) protein is Cupiennin-6e.